The following is a 1211-amino-acid chain: Sterol 3-beta-glucosyltransferase (1211 aa).

Over residues 1–10 the composition is skewed to basic and acidic residues; the sequence is MSQLRPRDSS. Residues 1 to 61 are disordered; it reads MSQLRPRDSS…DETEAEDDID (61 aa). One can recognise a GRAM 1 domain in the interval 196 to 235; the sequence is EKLKTTFDLSDDDEFVNDYPCWLLHEVFLQGHIYITSRYL. One can recognise a PH domain in the interval 248–347; sequence VTMSGALSIR…WVTDLRKHIF (100 aa). 2 disordered regions span residues 422-452 and 500-531; these read LTDS…KLSR and VVPN…PSNW. Acidic residues predominate over residues 423 to 432; the sequence is TDSDSSESDS. The span at 507-525 shows a compositional bias: basic and acidic residues; sequence SELKQDHAGDAPKDSEEPS. The GRAM 2 domain occupies 586–652; the sequence is SRFRKHFSLP…SDIENVYNLK (67 aa). 13 residues coordinate UDP-alpha-D-glucose: Ser770, Arg771, Asp773, Asn1046, Asn1072, Val1073, His1075, His1088, Ser1091, Gly1092, Thr1093, Asp1112, and Gln1113.

It belongs to the glycosyltransferase 28 family.

It is found in the cytoplasm. Its subcellular location is the preautophagosomal structure membrane. The catalysed reaction is a sterol + UDP-alpha-D-glucose = a sterol 3-beta-D-glucoside + UDP + H(+). It catalyses the reaction ergosterol + UDP-alpha-D-glucose = ergosteryl 3-beta-D-glucoside + UDP + H(+). Functionally, sterol glycosyltransferase responsible for the glycosylation of ergosterol to form ergosterol-glucoside. Shows also activity in vitro on other sterols such as cholesterol, beta-sitosterol, stigmasterol and tomatidine. Probable sterol 3-beta-glucosyltransferase that mediates autophagic degradation of peroxisomes (pexophagy). This is Sterol 3-beta-glucosyltransferase from Komagataella phaffii (strain GS115 / ATCC 20864) (Yeast).